Consider the following 310-residue polypeptide: S-methyl-5'-thioadenosine phosphorylase (310 aa).

Phosphate-binding positions include T20, 62–63, and 95–96; these read RH and SA. M197 is a binding site for substrate. S198 contributes to the phosphate binding site. 221–223 lines the substrate pocket; it reads DYD.

It belongs to the PNP/MTAP phosphorylase family. MTAP subfamily. As to quaternary structure, homotrimer.

The protein localises to the cytoplasm. Its subcellular location is the nucleus. The enzyme catalyses S-methyl-5'-thioadenosine + phosphate = 5-(methylsulfanyl)-alpha-D-ribose 1-phosphate + adenine. The protein operates within amino-acid biosynthesis; L-methionine biosynthesis via salvage pathway; S-methyl-5-thio-alpha-D-ribose 1-phosphate from S-methyl-5'-thioadenosine (phosphorylase route): step 1/1. In terms of biological role, catalyzes the reversible phosphorylation of S-methyl-5'-thioadenosine (MTA) to adenine and 5-methylthioribose-1-phosphate. Involved in the breakdown of MTA, a major by-product of polyamine biosynthesis. Responsible for the first step in the methionine salvage pathway after MTA has been generated from S-adenosylmethionine. Has broad substrate specificity with 6-aminopurine nucleosides as preferred substrates. This Neurospora crassa (strain ATCC 24698 / 74-OR23-1A / CBS 708.71 / DSM 1257 / FGSC 987) protein is S-methyl-5'-thioadenosine phosphorylase.